The primary structure comprises 250 residues: MEWTAPCIVLSAQPYGEADCLAAVFSEDQGLYRGLVRGGTSRQRGGIWQPGNLVMARWTARLADQLGSLTAELIHPAAALAMDDPLNLAVLRSLCTVAEGALPDREAHPAAFIPLPGLLTRLSLGGGQVVEDAIRWEAILLRELGYGLDLQRCAVTGQVSGLHYVSPRTGRAVSSDAAEPWLDRLLPLPAFLLHQAETDSDPVAWRDGLRLTGYFLSRDVFGTRHRPLPPARMSLYDRIAALTETEREHA.

It belongs to the RecO family.

In terms of biological role, involved in DNA repair and RecF pathway recombination. In Granulibacter bethesdensis (strain ATCC BAA-1260 / CGDNIH1), this protein is DNA repair protein RecO.